The chain runs to 827 residues: Spastin (827 aa).

The segment covering 1–13 (MVRNKYTLTTAGK) has biased composition (polar residues). Residues 1-58 (MVRNKYTLTTAGKSPSKKSRTGSLSKQHDATGDDDGETGTLDGSGSAAGSPVGGGTDA) are disordered. Residues 1–79 (MVRNKYTLTT…KQNLYIISFP (79 aa)) are Cytoplasmic-facing. The segment covering 38–50 (TGTLDGSGSAAGS) has biased composition (low complexity). Residues 80 to 100 (VIFVFNVLRSLLYQLFIVFRY) constitute an intramembrane region (helical). Over 101–827 (VYNFTTKVVY…WLQDFGDVTL (727 aa)) the chain is Cytoplasmic. Disordered regions lie at residues 127-190 (QHGH…AHPL) and 207-229 (SIQRSASGSQVGPGDPLLAKQKH). Residues 129 to 141 (GHHHHHHHRHSSH) show a composition bias toward basic residues. Positions 142-190 (SIHSTAAAHQLQQHQQQQQHQYSLLQQEQHGVTEPQQQQQQQHQAAHPL) are enriched in low complexity. Residues 231-306 (HRRAFEYISK…SMARDRLQFL (76 aa)) enclose the MIT domain. Disordered stretches follow at residues 358-381 (HHPARGTAASSRPTTAATAPATPS), 398-433 (VGYKRPGNLGVMNKSQTLPRSMGGTRTTPTGTGGAG), and 476-526 (VSIP…PQIS). A compositionally biased stretch (low complexity) spans 364–381 (TAASSRPTTAATAPATPS). Low complexity-rich tracts occupy residues 476–486 (VSIPIPGSSPV) and 510–524 (QQPQQPQQQQQQQPQ). Position 592–599 (592–599 (GPPGNGKT)) interacts with ATP.

The protein belongs to the AAA ATPase family. Spastin subfamily. Homohexamer. The homohexamer is stabilized by ATP-binding. The homohexamer may adopt a ring conformation through which microtubules pass prior to being severed. Interacts with microtubules.

It is found in the membrane. It localises to the cytoplasm. Its subcellular location is the cytoskeleton. The protein resides in the microtubule organizing center. The protein localises to the centrosome. The enzyme catalyses n ATP + n H2O + a microtubule = n ADP + n phosphate + (n+1) alpha/beta tubulin heterodimers.. Its function is as follows. ATP-dependent microtubule severing protein. Microtubule severing may promote reorganization of cellular microtubule arrays and the release of microtubules from the microtubule organizing center following nucleation. The polypeptide is Spastin (spas) (Anopheles gambiae (African malaria mosquito)).